A 449-amino-acid chain; its full sequence is GTPase Der (449 aa).

EngA-type G domains follow at residues 4–169 and 177–353; these read PIVA…PAGE and IQVA…EQHR. GTP contacts are provided by residues 10 to 17, 57 to 61, 120 to 123, 183 to 190, 230 to 234, and 295 to 298; these read GRPNVGKS, DTGGL, NKCE, DTAGI, and NKWD. The KH-like domain maps to 354-439; sequence RRVTTAVVND…PIRLLWRSKK (86 aa).

Belongs to the TRAFAC class TrmE-Era-EngA-EngB-Septin-like GTPase superfamily. EngA (Der) GTPase family. As to quaternary structure, associates with the 50S ribosomal subunit.

Functionally, GTPase that plays an essential role in the late steps of ribosome biogenesis. This chain is GTPase Der, found in Thermosynechococcus vestitus (strain NIES-2133 / IAM M-273 / BP-1).